The sequence spans 207 residues: Large ribosomal subunit protein uL4 (207 aa).

The interval 50-76 (AVKNRSAVSGGGRKPWKQKGTGRARQG) is disordered.

The protein belongs to the universal ribosomal protein uL4 family. In terms of assembly, part of the 50S ribosomal subunit.

Its function is as follows. One of the primary rRNA binding proteins, this protein initially binds near the 5'-end of the 23S rRNA. It is important during the early stages of 50S assembly. It makes multiple contacts with different domains of the 23S rRNA in the assembled 50S subunit and ribosome. Forms part of the polypeptide exit tunnel. This Macrococcus caseolyticus (strain JCSC5402) (Macrococcoides caseolyticum) protein is Large ribosomal subunit protein uL4.